The following is a 165-amino-acid chain: Crossover junction endodeoxyribonuclease RuvC (165 aa).

Active-site residues include D8, E69, and H141. Mg(2+)-binding residues include D8, E69, and H141.

This sequence belongs to the RuvC family. Homodimer which binds Holliday junction (HJ) DNA. The HJ becomes 2-fold symmetrical on binding to RuvC with unstacked arms; it has a different conformation from HJ DNA in complex with RuvA. In the full resolvosome a probable DNA-RuvA(4)-RuvB(12)-RuvC(2) complex forms which resolves the HJ. The cofactor is Mg(2+).

It is found in the cytoplasm. The enzyme catalyses Endonucleolytic cleavage at a junction such as a reciprocal single-stranded crossover between two homologous DNA duplexes (Holliday junction).. Its function is as follows. The RuvA-RuvB-RuvC complex processes Holliday junction (HJ) DNA during genetic recombination and DNA repair. Endonuclease that resolves HJ intermediates. Cleaves cruciform DNA by making single-stranded nicks across the HJ at symmetrical positions within the homologous arms, yielding a 5'-phosphate and a 3'-hydroxyl group; requires a central core of homology in the junction. The consensus cleavage sequence is 5'-(A/T)TT(C/G)-3'. Cleavage occurs on the 3'-side of the TT dinucleotide at the point of strand exchange. HJ branch migration catalyzed by RuvA-RuvB allows RuvC to scan DNA until it finds its consensus sequence, where it cleaves and resolves the cruciform DNA. This chain is Crossover junction endodeoxyribonuclease RuvC, found in Wolbachia pipientis subsp. Culex pipiens (strain wPip).